Here is a 746-residue protein sequence, read N- to C-terminus: Protein C-mannosyl-transferase DPY19L1 (746 aa).

The disordered stretch occupies residues M1–D68. 2 positions are modified to phosphoserine: S28 and S31. Low complexity predominate over residues R59–D68. A run of 11 helical transmembrane segments spans residues L137 to M159, A227 to I247, L257 to T279, L307 to P325, F331 to D350, I357 to G374, T380 to M396, V405 to L425, L481 to M501, G520 to M540, and L562 to A582.

This sequence belongs to the dpy-19 family.

It localises to the endoplasmic reticulum membrane. The enzyme catalyses L-tryptophyl-[protein] + a di-trans,poly-cis-dolichyl beta-D-mannosyl phosphate = C-alpha-D-mannosyl-L-tryptophyl-[protein] + a di-trans,poly-cis-dolichyl phosphate + H(+). It participates in protein modification; protein glycosylation. Its function is as follows. C-mannosyltransferase that mediates the C-mannosylation tryptophan residues on target proteins. The reaction occurs on the luminal side of the endoplasmic reticulum and involves the transfer of a mannose unit from a dolichylphosphate mannose (Dol-P-Man) donor to an acceptor protein containing a WxxW consensus sequence. C-mannosylates the first two tryptophans in the WxxWxxWxxC sequence motif in thrombospondin (TSP) type-1 repeats of UNC5A. Regulates neurite extension during development. The chain is Protein C-mannosyl-transferase DPY19L1 (Dpy19l1) from Mus musculus (Mouse).